The chain runs to 105 residues: dATP/dGTP diphosphohydrolase (105 aa).

This sequence belongs to the Caudovirales dATP/dGTP diphosphohydrolase family. Co(2+) is required as a cofactor.

It carries out the reaction dGTP + H2O = dGMP + diphosphate + H(+). It catalyses the reaction dATP + H2O = dAMP + diphosphate + H(+). Its pathway is purine metabolism. Catalyzes the hydrolysis of dGTP into dGMP, which is needed among other for the first step of biosynthesis of dZTP (2-amino-2'-deoxyadenosine-5'-triphosphate). This Cyanophage S-2L (Cyanobacteria phage S-2L) protein is dATP/dGTP diphosphohydrolase.